Consider the following 501-residue polypeptide: Pyruvate kinase (501 aa).

Substrate is bound at residue Arg-50. 4 residues coordinate K(+): Asn-52, Ser-54, Asp-85, and Thr-86. Residue 52 to 55 (NFSH) coordinates ATP. Positions 92 and 178 each coordinate ATP. Residue Glu-243 coordinates Mg(2+). Residues Gly-266, Asp-267, and Thr-299 each coordinate substrate. Asp-267 provides a ligand contact to Mg(2+).

The protein belongs to the pyruvate kinase family. Homotetramer. The cofactor is Mg(2+). Requires K(+) as cofactor.

The catalysed reaction is pyruvate + ATP = phosphoenolpyruvate + ADP + H(+). It functions in the pathway carbohydrate degradation; glycolysis; pyruvate from D-glyceraldehyde 3-phosphate: step 5/5. This chain is Pyruvate kinase (PYK1), found in Kluyveromyces lactis (strain ATCC 8585 / CBS 2359 / DSM 70799 / NBRC 1267 / NRRL Y-1140 / WM37) (Yeast).